We begin with the raw amino-acid sequence, 146 residues long: Cytochrome c oxidase subunit 5A, mitochondrial (146 aa).

The transit peptide at 1–37 directs the protein to the mitochondrion; sequence MLAAALRRCTAAAAARGLLHPVSAPSPAAAVCSIRCY. The SIFI-degron motif lies at 2 to 16; that stretch reads LAAALRRCTAAAAAR. Residues lysine 83 and lysine 109 each carry the N6-acetyllysine modification. Residue threonine 137 is modified to Phosphothreonine.

In terms of assembly, component of the cytochrome c oxidase (complex IV, CIV), a multisubunit enzyme composed of 14 subunits. The complex is composed of a catalytic core of 3 subunits MT-CO1, MT-CO2 and MT-CO3, encoded in the mitochondrial DNA, and 11 supernumerary subunits COX4I, COX5A, COX5B, COX6A, COX6B, COX6C, COX7A, COX7B, COX7C, COX8 and NDUFA4, which are encoded in the nuclear genome. The complex exists as a monomer or a dimer and forms supercomplexes (SCs) in the inner mitochondrial membrane with NADH-ubiquinone oxidoreductase (complex I, CI) and ubiquinol-cytochrome c oxidoreductase (cytochrome b-c1 complex, complex III, CIII), resulting in different assemblies (supercomplex SCI(1)III(2)IV(1) and megacomplex MCI(2)III(2)IV(2)). Interacts with AFG1L. Interacts with RAB5IF. In terms of processing, in response to mitochondrial stress, the precursor protein is ubiquitinated by the SIFI complex in the cytoplasm before mitochondrial import, leading to its degradation. Within the SIFI complex, UBR4 initiates ubiquitin chain that are further elongated or branched by KCMF1. In terms of tissue distribution, expressed in the head of epididymal sperm but not in testicular sperm (at protein level).

The protein localises to the mitochondrion inner membrane. Its pathway is energy metabolism; oxidative phosphorylation. In terms of biological role, component of the cytochrome c oxidase, the last enzyme in the mitochondrial electron transport chain which drives oxidative phosphorylation. The respiratory chain contains 3 multisubunit complexes succinate dehydrogenase (complex II, CII), ubiquinol-cytochrome c oxidoreductase (cytochrome b-c1 complex, complex III, CIII) and cytochrome c oxidase (complex IV, CIV), that cooperate to transfer electrons derived from NADH and succinate to molecular oxygen, creating an electrochemical gradient over the inner membrane that drives transmembrane transport and the ATP synthase. Cytochrome c oxidase is the component of the respiratory chain that catalyzes the reduction of oxygen to water. Electrons originating from reduced cytochrome c in the intermembrane space (IMS) are transferred via the dinuclear copper A center (CU(A)) of subunit 2 and heme A of subunit 1 to the active site in subunit 1, a binuclear center (BNC) formed by heme A3 and copper B (CU(B)). The BNC reduces molecular oxygen to 2 water molecules using 4 electrons from cytochrome c in the IMS and 4 protons from the mitochondrial matrix. This chain is Cytochrome c oxidase subunit 5A, mitochondrial (Cox5a), found in Rattus norvegicus (Rat).